A 103-amino-acid chain; its full sequence is MQNQKIRIRLKAFDYRLIDQSALEIVDTAKRTGAVVRGPVPLPTRIERFNLLRSPHVNKTSRDQMEIRTHQRLMDIIDPTDKTVDALMKLDLPAGVDVEIKLQ.

It belongs to the universal ribosomal protein uS10 family. As to quaternary structure, part of the 30S ribosomal subunit.

Its function is as follows. Involved in the binding of tRNA to the ribosomes. The sequence is that of Small ribosomal subunit protein uS10 from Azoarcus sp. (strain BH72).